Reading from the N-terminus, the 393-residue chain is Elongation factor Tu (393 aa).

Residues Lys-10–Val-203 enclose the tr-type G domain. Residues Gly-19–Thr-26 form a G1 region. Position 19–26 (Gly-19–Thr-26) interacts with GTP. Thr-26 is a binding site for Mg(2+). The G2 stretch occupies residues Gly-60–Ser-64. The G3 stretch occupies residues Asp-81–Gly-84. Residues Asp-81 to His-85 and Asn-136 to Asp-139 contribute to the GTP site. The interval Asn-136 to Asp-139 is G4. The G5 stretch occupies residues Ser-173–Leu-175.

The protein belongs to the TRAFAC class translation factor GTPase superfamily. Classic translation factor GTPase family. EF-Tu/EF-1A subfamily. Monomer.

The protein localises to the cytoplasm. The enzyme catalyses GTP + H2O = GDP + phosphate + H(+). GTP hydrolase that promotes the GTP-dependent binding of aminoacyl-tRNA to the A-site of ribosomes during protein biosynthesis. The sequence is that of Elongation factor Tu from Chlorobaculum tepidum (strain ATCC 49652 / DSM 12025 / NBRC 103806 / TLS) (Chlorobium tepidum).